We begin with the raw amino-acid sequence, 288 residues long: ATP synthase gamma chain (288 aa).

Belongs to the ATPase gamma chain family. As to quaternary structure, F-type ATPases have 2 components, CF(1) - the catalytic core - and CF(0) - the membrane proton channel. CF(1) has five subunits: alpha(3), beta(3), gamma(1), delta(1), epsilon(1). CF(0) has three main subunits: a, b and c.

Its subcellular location is the cell inner membrane. Its function is as follows. Produces ATP from ADP in the presence of a proton gradient across the membrane. The gamma chain is believed to be important in regulating ATPase activity and the flow of protons through the CF(0) complex. The sequence is that of ATP synthase gamma chain from Polaromonas sp. (strain JS666 / ATCC BAA-500).